We begin with the raw amino-acid sequence, 300 residues long: N-acetylmuramic acid 6-phosphate etherase 1 (300 aa).

Residues 59–222 (AAERFKKGGR…STGIMVKVGN (164 aa)) enclose the SIS domain. Residue E87 is the Proton donor of the active site. E118 is a catalytic residue.

The protein belongs to the GCKR-like family. MurNAc-6-P etherase subfamily. As to quaternary structure, homodimer.

The catalysed reaction is N-acetyl-D-muramate 6-phosphate + H2O = N-acetyl-D-glucosamine 6-phosphate + (R)-lactate. Its pathway is amino-sugar metabolism; N-acetylmuramate degradation. In terms of biological role, specifically catalyzes the cleavage of the D-lactyl ether substituent of MurNAc 6-phosphate, producing GlcNAc 6-phosphate and D-lactate. The polypeptide is N-acetylmuramic acid 6-phosphate etherase 1 (Enterococcus faecalis (strain ATCC 700802 / V583)).